Consider the following 212-residue polypeptide: Ras-related protein Rab-2A (212 aa).

Ala2 carries the post-translational modification N-acetylalanine. The required for interaction with PRKCI stretch occupies residues 2–19 (AYAYLFKYIIIGDTGVGK). Residues Gly16, Val17, Gly18, Lys19, Ser20, Cys21, and Thr38 each coordinate GTP. Ser20 serves as a coordination point for Mg(2+). A Switch 1 motif is present at residues 37–42 (LTIGVE). Thr38 and Asp61 together coordinate Mg(2+). The Switch 2 signature appears at 63-72 (AGQESFRSIT). The GTP site is built by Gly64, Asn119, Lys120, Asp122, Ala150, and Lys151. 2 S-geranylgeranyl cysteine lipidation sites follow: Cys211 and Cys212.

Belongs to the small GTPase superfamily. Rab family. Interacts with PRKCI. Interacts with TRIP11. Interacts (in GTP-bound form) with GARIN1B. Interacts (GTP-bound) with HOPS complex component VPS39; interaction contributes to obtaining a functional HOPS complex that promotes autophagosome-lysosome membrane fusion driven by STX17-SNAP29-VAMP8. May interact with VPS41. It depends on Mg(2+) as a cofactor. Prenylated. Prenylation is required for association with cellular membranes. In terms of tissue distribution, brain and parietal cells.

It localises to the endoplasmic reticulum-Golgi intermediate compartment membrane. The protein localises to the melanosome. The protein resides in the endoplasmic reticulum membrane. It is found in the golgi apparatus membrane. Its subcellular location is the cytoplasmic vesicle. It localises to the secretory vesicle. The protein localises to the acrosome. The protein resides in the autophagosome membrane. The enzyme catalyses GTP + H2O = GDP + phosphate + H(+). Regulated by guanine nucleotide exchange factors (GEFs) which promote the exchange of bound GDP for free GTP, GTPase activating proteins (GAPs) which increase the GTP hydrolysis activity, and GDP dissociation inhibitors (GDIs) which inhibit the dissociation of the nucleotide from the GTPase. Its function is as follows. The small GTPases Rab are key regulators of intracellular membrane trafficking, from the formation of transport vesicles to their fusion with membranes. Rabs cycle between active GTP-bound and inactive GDP-bound states. In their active state, drive transport of vesicular carriers from donor organelles to acceptor organelles to regulate the membrane traffic that maintains organelle identity and morphology. RAB2A regulates autophagy by promoting autophagosome-lysosome fusion via recruitment of the HOPS endosomal tethering complex; this process involves autophagosomal RAB2A and lysosomal RAB39A recruitment of HOPS subcomplexes VPS39-VPS11 and VPS41-VPS16-VPS18-VPS33A, respectively, which assemble into a functional complex to mediate membrane tethering and SNAREs-driven membrane fusion. Required for protein transport from the endoplasmic reticulum to the Golgi complex. Regulates the compacted morphology of the Golgi. Together with RAB2B, redundantly required for efficient autophagic flux. This chain is Ras-related protein Rab-2A (RAB2A), found in Oryctolagus cuniculus (Rabbit).